A 66-amino-acid chain; its full sequence is Large ribosomal subunit protein bL35 (66 aa).

Residues G20 to I41 are disordered. A compositionally biased stretch (basic residues) spans R27–I41.

Belongs to the bacterial ribosomal protein bL35 family.

The protein is Large ribosomal subunit protein bL35 of Rhodopseudomonas palustris (strain BisB5).